The primary structure comprises 580 residues: Glutamine--tRNA ligase (580 aa).

The short motif at 41–51 (PEPNGYLHIGH) is the 'HIGH' region element. Residues 42–44 (EPN) and 48–54 (HIGHAKA) each bind ATP. The L-glutamine site is built by D74 and Y218. Residues T237, 285 to 286 (RL), and 293 to 295 (MSK) contribute to the ATP site. The 'KMSKS' region signature appears at 292 to 296 (VMSKR).

It belongs to the class-I aminoacyl-tRNA synthetase family. In terms of assembly, monomer.

It localises to the cytoplasm. It carries out the reaction tRNA(Gln) + L-glutamine + ATP = L-glutaminyl-tRNA(Gln) + AMP + diphosphate. In Xylella fastidiosa (strain 9a5c), this protein is Glutamine--tRNA ligase.